The sequence spans 160 residues: Class B acid phosphatase (160 aa).

The N-terminal stretch at 1–23 (MRKVTLTLSAIALALSLNGAAMA) is a signal peptide. Residue Asp-69 is the Nucleophile of the active site. Asp-69 and Asp-71 together coordinate Mg(2+). Asp-71 serves as the catalytic Proton donor. 137-138 (TG) contributes to the substrate binding site.

This sequence belongs to the class B bacterial acid phosphatase family. As to quaternary structure, homotetramer. It depends on Mg(2+) as a cofactor.

The protein localises to the periplasm. The catalysed reaction is a phosphate monoester + H2O = an alcohol + phosphate. Its function is as follows. Dephosphorylates several organic phosphate monoesters. Also has a phosphotransferase activity catalyzing the transfer of low-energy phosphate groups from organic phosphate monoesters to free hydroxyl groups of various organic compounds. The sequence is that of Class B acid phosphatase (aphA) from Proteus mirabilis.